Consider the following 175-residue polypeptide: Disulfide bond formation protein B 2 (175 aa).

Over 1–9 the chain is Cytoplasmic; it reads MYLARTRFL. Residues 10 to 26 traverse the membrane as a helical segment; it reads FFLASLACASIIGTAFY. Residues 27-44 are Periplasmic-facing; sequence LQQTFGLDPCFLCLIQRA. Cys-36 and Cys-39 form a disulfide bridge. Residues 45 to 61 traverse the membrane as a helical segment; sequence AIIACGVLALCAACHAP. Residues 62–68 lie on the Cytoplasmic side of the membrane; sequence GPTGMRR. The helical transmembrane segment at 69–85 threads the bilayer; sequence YSLGFLLIALTGLVTAG. The Periplasmic portion of the chain corresponds to 86–142; it reads AQVWLQTASADQLIPFITKLEHLLSLLSLDMCIDRLRSDAMFCAEITWTLFGISLPE. The chain crosses the membrane as a helical span at residues 143-161; sequence WSLLAFTGLALLPLYPLFS. Topologically, residues 162–175 are cytoplasmic; sequence EFSHWLATKDRARY.

The protein belongs to the DsbB family.

Its subcellular location is the cell inner membrane. In terms of biological role, required for disulfide bond formation in some periplasmic proteins. Acts by oxidizing the DsbA protein. This Pseudomonas savastanoi pv. phaseolicola (strain 1448A / Race 6) (Pseudomonas syringae pv. phaseolicola (strain 1448A / Race 6)) protein is Disulfide bond formation protein B 2.